A 465-amino-acid polypeptide reads, in one-letter code: Cysteine--tRNA ligase (465 aa).

Cys-29 serves as a coordination point for Zn(2+). The short motif at 31–41 is the 'HIGH' region element; that stretch reads PTVYNYIHIGN. Cys-209, His-234, and Glu-238 together coordinate Zn(2+). Residues 266 to 270 carry the 'KMSKS' region motif; it reads KMSKS. Lys-269 is a binding site for ATP. Ser-270 bears the Phosphoserine mark.

It belongs to the class-I aminoacyl-tRNA synthetase family. As to quaternary structure, monomer. Zn(2+) is required as a cofactor.

It is found in the cytoplasm. It carries out the reaction tRNA(Cys) + L-cysteine + ATP = L-cysteinyl-tRNA(Cys) + AMP + diphosphate. The chain is Cysteine--tRNA ligase from Bacillus cereus (strain B4264).